The sequence spans 189 residues: Large ribosomal subunit protein eL18 (189 aa).

This sequence belongs to the eukaryotic ribosomal protein eL18 family.

The protein localises to the cytoplasm. The protein is Large ribosomal subunit protein eL18 (RpL18) of Anopheles gambiae (African malaria mosquito).